The primary structure comprises 783 residues: E3 UFM1-protein ligase 1 homolog (783 aa).

The segment at 404–482 (SNSSANFDAD…AGSSRKSVKP (79 aa)) is disordered. Positions 445-457 (KSTKKHQRGRAAA) are enriched in basic residues.

Belongs to the UFL1 family.

In terms of biological role, E3 UFM1-protein ligase that mediates ufmylation of target proteins. The sequence is that of E3 UFM1-protein ligase 1 homolog from Drosophila mojavensis (Fruit fly).